We begin with the raw amino-acid sequence, 194 residues long: Surfactant protein C (194 aa).

The tract at residues 1-21 is disordered; sequence MDMGSKEVLMESPPDYSTGPR. The propeptide occupies 1-23; sequence MDMGSKEVLMESPPDYSTGPRSQ. Residues Cys-28 and Cys-29 are each lipidated (S-palmitoyl cysteine). Positions 59 to 194 are excised as a propeptide; the sequence is HMSQKHTEMV…LCGELPLYYI (136 aa). In terms of domain architecture, BRICHOS spans 95–194; sequence FSIGSTGIVL…LCGELPLYYI (100 aa). A disulfide bridge links Cys-122 with Cys-186. The tract at residues 149–170 is disordered; sequence SSTPTSKLGQEEGHSAGSDSDS.

It is found in the secreted. It localises to the extracellular space. The protein localises to the surface film. Functionally, pulmonary surfactant associated proteins promote alveolar stability by lowering the surface tension at the air-liquid interface in the peripheral air spaces. The protein is Surfactant protein C of Rattus norvegicus (Rat).